The primary structure comprises 87 residues: Protein E7 (87 aa).

Positions 1–38 (MHGPHPTVKDIELSLAPEDVPVQCNVQLDEEDYTNVEE) are E7 terminal domain. The segment at 50-86 (CPKCSSPLRLVVECSHADIRALEQLLLGTLTVVCPRC) is a zinc-finger region. A Nuclear export signal motif is present at residues 68–76 (IRALEQLLL).

It belongs to the papillomaviridae E7 protein family. In terms of assembly, homodimer. Homooligomer. Interacts with host RB1; this interaction induces dissociation of RB1-E2F1 complex thereby disrupting RB1 activity. Interacts with host EP300; this interaction represses EP300 transcriptional activity. Interacts with protein E2; this interaction inhibits E7 oncogenic activity. Interacts with host TMEM173/STING; this interaction impairs the ability of TMEM173/STING to sense cytosolic DNA and promote the production of type I interferon (IFN-alpha and IFN-beta). In terms of processing, highly phosphorylated.

The protein localises to the host cytoplasm. Its subcellular location is the host nucleus. Functionally, plays a role in viral genome replication by driving entry of quiescent cells into the cell cycle. Stimulation of progression from G1 to S phase allows the virus to efficiently use the cellular DNA replicating machinery to achieve viral genome replication. E7 protein has both transforming and trans-activating activities. Induces the disassembly of the E2F1 transcription factor from RB1, with subsequent transcriptional activation of E2F1-regulated S-phase genes. Interferes with host histone deacetylation mediated by HDAC1 and HDAC2, leading to transcription activation. Also plays a role in the inhibition of both antiviral and antiproliferative functions of host interferon alpha. Interaction with host TMEM173/STING impairs the ability of TMEM173/STING to sense cytosolic DNA and promote the production of type I interferon (IFN-alpha and IFN-beta). This chain is Protein E7, found in Human papillomavirus 28.